The chain runs to 388 residues: Chorismate synthase (388 aa).

R39 and R45 together coordinate NADP(+). FMN is bound by residues 130–132 (RSS), 251–252 (NA), G296, 311–315 (KPIPT), and R337.

Belongs to the chorismate synthase family. Homotetramer. The cofactor is FMNH2.

It catalyses the reaction 5-O-(1-carboxyvinyl)-3-phosphoshikimate = chorismate + phosphate. Its pathway is metabolic intermediate biosynthesis; chorismate biosynthesis; chorismate from D-erythrose 4-phosphate and phosphoenolpyruvate: step 7/7. Its function is as follows. Catalyzes the anti-1,4-elimination of the C-3 phosphate and the C-6 proR hydrogen from 5-enolpyruvylshikimate-3-phosphate (EPSP) to yield chorismate, which is the branch point compound that serves as the starting substrate for the three terminal pathways of aromatic amino acid biosynthesis. This reaction introduces a second double bond into the aromatic ring system. This Streptococcus agalactiae serotype III (strain NEM316) protein is Chorismate synthase.